Here is a 159-residue protein sequence, read N- to C-terminus: Transcriptional repressor NrdR (159 aa).

Polar residues predominate over residues M1–S11. The tract at residues M1–S21 is disordered. A zinc finger spans residues C3–C34. The 91-residue stretch at V49 to D139 folds into the ATP-cone domain.

The protein belongs to the NrdR family. The cofactor is Zn(2+).

In terms of biological role, negatively regulates transcription of bacterial ribonucleotide reductase nrd genes and operons by binding to NrdR-boxes. The sequence is that of Transcriptional repressor NrdR from Prochlorococcus marinus (strain AS9601).